The following is a 162-amino-acid chain: MKKTSINTGTPDVKVDEAALVTPFVKCLARLVRAQDTYGSQDRASDAELLAHFIITEEQRREIPIIGDPGPDVMLRFNIFYTAVALSIEARTGLVASPITMISHEGFGRVLLTTGRLVVFSKTVRDIHRFGFATLRKLAEAGAKLVDDATAAIETYPEVARA.

It belongs to the UPF0460 family.

This chain is UPF0460 protein y4vQ, found in Sinorhizobium fredii (strain NBRC 101917 / NGR234).